A 275-amino-acid polypeptide reads, in one-letter code: MSHCSSRALTLLSSVFGACGLLLVGIAVSTDYWLYMEEGTVLPQNQTTEVKMALHAGLWRVCFFAGREKGRCVASEYFLEPEINLVTENTENILKTVRTATPFPMVSLFLVFTAFVISNIGHIRPQRTILAFVSGIFFILSGLSLVVGLVLYISSINDEVMNRPSSSEQYFHYRYGWSFAFAASSFLLKEGAGVMSVYLFTKRYAEEEMYRPHPAFYRPRLSDCSDYSGQFLQPEAWRRGRSPSDISSDVSIQMTQNYPPAIKYPDHLHISTSPC.

4 helical membrane-spanning segments follow: residues 8 to 28, 103 to 123, 129 to 149, and 179 to 199; these read ALTL…GIAV, FPMV…IGHI, ILAF…VVGL, and FAFA…SVYL. A phosphoserine mark is found at Ser-222, Ser-225, and Ser-273.

The protein belongs to the PMP-22/EMP/MP20 family. CACNG subfamily. As to quaternary structure, interacts with CACNA1C. Identified in a complex with the L-type calcium channel subunits CACNA1C, CACNA2D1 and either CACNB1 or CACNB2. Acts as an auxiliary subunit for AMPA-selective glutamate receptors (AMPARs), such as GRIA1 and GRIA2. Detected in heart left ventricle. Widely expressed.

It is found in the cell membrane. Its function is as follows. Regulates the activity of L-type calcium channels that contain CACNA1C as pore-forming subunit. Regulates the trafficking and gating properties of AMPA-selective glutamate receptors (AMPARs). Promotes their targeting to the cell membrane and synapses and modulates their gating properties by slowing their rates of activation, deactivation and desensitization and by mediating their resensitization. Displays subunit-specific AMPA receptor regulation. Shows specificity only for GRIA1 and GRIA2. This is Voltage-dependent calcium channel gamma-7 subunit (CACNG7) from Homo sapiens (Human).